A 176-amino-acid chain; its full sequence is Protein tyrosine phosphatase PRL-1 (176 aa).

The Tyrosine-protein phosphatase domain occupies 13 to 165 (GESDAVVFRF…YKPRHQEGNE (153 aa)). Cys52 and Cys107 are disulfide-bonded. Asp75 (proton donor) is an active-site residue. The Phosphocysteine intermediate role is filled by Cys107. 109 to 113 (AGLGR) lines the substrate pocket. Residue Cys173 is modified to Cysteine methyl ester. The S-farnesyl cysteine moiety is linked to residue Cys173. The propeptide at 174-176 (AVM) is removed in mature form.

This sequence belongs to the protein-tyrosine phosphatase family.

The protein localises to the flagellar pocket. The enzyme catalyses O-phospho-L-tyrosyl-[protein] + H2O = L-tyrosyl-[protein] + phosphate. Its activity is regulated as follows. Activated in a reduced environment which promotes the reduction of the disulfide bond between the regulatory Cys-52 and the catalytic Cys-107 residues. Inhibited by sodium orthovanadate. Its function is as follows. Has protein tyrosine phosphatase activity. The sequence is that of Protein tyrosine phosphatase PRL-1 from Trypanosoma cruzi (strain CL Brener).